The primary structure comprises 326 residues: Structural protein ORF326a (326 aa).

Positions 1–28 (MSTTFRGKKEEEEEEEEEKEEKEEELFN) are disordered. Over residues 11 to 26 (EEEEEEEEKEEKEEEL) the composition is skewed to acidic residues.

The protein localises to the virion. The polypeptide is Structural protein ORF326a (Acidianus two-tailed virus (ATV)).